A 2259-amino-acid polypeptide reads, in one-letter code: Golgin subfamily A member 4 (2259 aa).

The disordered stretch occupies residues methionine 1 to glutamate 54. Serine 10 is modified (phosphoserine). Positions glutamate 12–serine 41 are enriched in low complexity. Phosphothreonine is present on threonine 39. Phosphoserine is present on residues serine 41, serine 104, and serine 111. The interaction with MACF1 stretch occupies residues serine 165–lysine 235. A coiled-coil region spans residues serine 167–alanine 2182. Basic and acidic residues-rich tracts occupy residues leucine 1932–glutamate 1946 and aspartate 1954–glutamate 1977. Residues leucine 1932 to glutamate 1977 form a disordered region. Residues leucine 2199 to arginine 2246 enclose the GRIP domain.

In terms of assembly, homodimer. Interacts with GTP-bound ARL1 and ARL3. Interacts with MACF1. Directly interacts with TBC1D23. Interacts with FAM91A1; this interaction may be mediated by TBC1D23. In terms of tissue distribution, expressed in the head of epididymal sperm but not in testicular sperm (at protein level).

The protein resides in the cytoplasm. Its subcellular location is the golgi apparatus membrane. It localises to the golgi apparatus. It is found in the trans-Golgi network membrane. Involved in vesicular trafficking at the Golgi apparatus level. May play a role in delivery of transport vesicles containing GPI-linked proteins from the trans-Golgi network through its interaction with MACF1. Involved in endosome-to-Golgi trafficking. The sequence is that of Golgin subfamily A member 4 from Rattus norvegicus (Rat).